Reading from the N-terminus, the 151-residue chain is Ribosome maturation factor RimP (151 aa).

It belongs to the RimP family.

It localises to the cytoplasm. Functionally, required for maturation of 30S ribosomal subunits. This Shewanella halifaxensis (strain HAW-EB4) protein is Ribosome maturation factor RimP.